The sequence spans 152 residues: CASP-like protein 5B1 (152 aa).

The Cytoplasmic segment spans residues Met-1–Met-11. A helical membrane pass occupies residues Ser-12–Val-32. Over Ser-33–Ala-42 the chain is Extracellular. A glycan (N-linked (GlcNAc...) asparagine) is linked at Asn-39. Residues Phe-43–Leu-63 traverse the membrane as a helical segment. The Cytoplasmic segment spans residues Asp-64–Pro-77. Residues Ile-78–Ala-98 traverse the membrane as a helical segment. Residues Cys-99–Gly-131 lie on the Extracellular side of the membrane. Residues Leu-132–Ile-152 form a helical membrane-spanning segment.

Belongs to the Casparian strip membrane proteins (CASP) family. Homodimer and heterodimers. Expressed in leaves, exclusively in hair cells (e.g. differentiated trichomes and immature cells).

Its subcellular location is the cell membrane. The chain is CASP-like protein 5B1 from Arabidopsis thaliana (Mouse-ear cress).